Consider the following 424-residue polypeptide: Protein arginine N-methyltransferase 2 (424 aa).

2 disordered regions span residues 67 to 89 (DEAQ…EQKS) and 151 to 212 (YEPL…SSRY). Residues 71–89 (TETNGVNGETSSASTEQKS) are compositionally biased toward polar residues. 2 stretches are compositionally biased toward low complexity: residues 163–173 (TGQGEDAANEP) and 187–201 (ETTA…ASTE). The RMT2 domain occupies 205 to 424 (PDVTSSRYLD…YRLPLCKFMD (220 aa)). Residues Tyr-212, Met-241, 261-266 (HGMGIV), 282-284 (EAH), 309-310 (WQ), and Asp-329 each bind S-adenosyl-L-methionine.

This sequence belongs to the class I-like SAM-binding methyltransferase superfamily. RMT2 methyltransferase family. Monomer.

It localises to the cytoplasm. It is found in the nucleus. S-adenosyl-L-methionine-dependent protein-arginine N-methyltransferase that methylates the delta-nitrogen atom of arginine residues to form N5-methylarginine (type IV) in target proteins. Monomethylates ribosomal protein L12. The sequence is that of Protein arginine N-methyltransferase 2 from Aspergillus fumigatus (strain ATCC MYA-4609 / CBS 101355 / FGSC A1100 / Af293) (Neosartorya fumigata).